The chain runs to 61 residues: Potassium channel toxin alpha-KTx 6.6 (61 aa).

The N-terminal stretch at 1 to 23 is a signal peptide; it reads MNAKFILLLLVVATTMLLPDTQG. Disulfide bonds link Cys29–Cys50, Cys35–Cys55, Cys39–Cys57, and Cys45–Cys60. Cys60 is modified (cysteine amide).

It belongs to the short scorpion toxin superfamily. Potassium channel inhibitor family. Alpha-KTx 06 subfamily. Expressed by the venom gland.

The protein localises to the secreted. Its function is as follows. Blocker of voltage-gated potassium channels. This chain is Potassium channel toxin alpha-KTx 6.6, found in Opistophthalmus carinatus (African yellow leg scorpion).